Reading from the N-terminus, the 555-residue chain is MQSVVCLIGAFIAAAVFRPGSCVGTVIGLYGETIVVPCNDGTKKPDGLIFTKWKYVKDDGSPGDLLVKQAQKDEATVSATDGYKSRVSIAANSSLLIARGSLADQRVFTCMVVSFTNLEEYSVEVKVHKKPSAPVIKNNAKELENGKLTQLGECVVENANPPADLIWKKNNQTLVDDGKTIIITSTITKDKITGLSSTSSRLQYTARKEDVESQFTCTAKHVMGPDQVSEPESFPIHYPTEKVSLQVVSQSPIREGEDVTLKCQADGNPPPTSFNFNIKGKKVTVTDKDVYTLTGVTRADSGIYKCSLLDNDVMESTQFVTVSFLDVSLTPTGKVLKNVGENLIVSLDKNASSEAKVTWTKDNRKLDKLPDFSKLTYSDAGLYVCDVSIEGIKRSLSFELTVEGIPKITSLTKHRSSDGKHKVLTCEAEGSPKPDVQWSVNGTNDEVSYNNGKATYKLTVVPSKNLTVSCLVTNKLGEDTKEISVFSQKNEDGTEQAKVIVGIVVGLLVAAALVGLIYWIYIKKTRQGSWKTGEKEAGTSEESKKLEENNHKPDV.

An N-terminal signal peptide occupies residues 1 to 22 (MQSVVCLIGAFIAAAVFRPGSC). Ig-like V-type domains lie at 23-127 (VGTV…EVKV) and 131-229 (PSAP…DQVS). Residues 23–499 (VGTVIGLYGE…NEDGTEQAKV (477 aa)) are Extracellular-facing. Disulfide bonds link C38-C110, C154-C217, and C263-C306. 2 N-linked (GlcNAc...) asparagine glycosylation sites follow: N92 and N171. 3 Ig-like C2-type domains span residues 239–323 (PTEK…VTVS), 319–397 (FVTV…RSLS), and 406–484 (PKIT…KEIS). N-linked (GlcNAc...) asparagine glycans are attached at residues N350, N441, and N465. Cysteines 426 and 470 form a disulfide. The helical transmembrane segment at 500–520 (IVGIVVGLLVAAALVGLIYWI) threads the bilayer. Over 521–555 (YIKKTRQGSWKTGEKEAGTSEESKKLEENNHKPDV) the chain is Cytoplasmic. Residues 529–555 (SWKTGEKEAGTSEESKKLEENNHKPDV) are disordered. A compositionally biased stretch (basic and acidic residues) spans 532–555 (TGEKEAGTSEESKKLEENNHKPDV).

In terms of assembly, homodimer. Interacts (via extracellular domain) with CD6 (via extracellular domain). Homodimerization and interaction with CD6 involve the same region and cannot occur simultaneously. The affinity for CD6 is much higher than the affinity for self-association. Present on all retinal ganglion cells (RGCS) and their axons (in embryo). Absent from mature axons along most of their length, but is present on new and growing axons derived from the RGCS at the retinal margin. Remains on adult RGCS only at cell-cell contact sites and is continuously found in the retinal axon terminal arbor layers of the adult tectum.

It is found in the cell membrane. It localises to the cell projection. Its subcellular location is the axon. The protein localises to the dendrite. Its function is as follows. Cell adhesion molecule that mediates both heterotypic cell-cell contacts via its interaction with CD6, as well as homotypic cell-cell contacts. Promotes T-cell activation and proliferation via its interactions with CD6. Contributes to the formation and maturation of the immunological synapse via its interactions with CD6. Mediates homotypic interactions with cells that express ALCAM. Mediates attachment of dendritic cells onto endothelial cells via homotypic interaction. Inhibits endothelial cell migration and promotes endothelial tube formation via homotypic interactions. Required for normal organization of the lymph vessel network. Required for normal hematopoietic stem cell engraftment in the bone marrow. Plays a role in hematopoiesis; required for normal numbers of hematopoietic stem cells in bone marrow. Promotes in vitro osteoblast proliferation and differentiation. Promotes neurite extension, axon growth and axon guidance; axons grow preferentially on surfaces that contain ALCAM. Mediates outgrowth and pathfinding for retinal ganglion cell axons. The polypeptide is CD166 antigen homolog (alcam) (Carassius auratus (Goldfish)).